The following is a 566-amino-acid chain: MSSAGVALSPVRSEPLIMPLVRANSCLDSYPDDTIMIYLTLPGSVIPMRVLESDSIESVKLRIQSYRGFVVRNQKLVFGGRELARSNSNMRDYGVSEGNILHLVLKLSDLQVLDVKTTCGKHCRFHVERGRNIGYVKKQISKKRGDFVDPDEQEILYEGEKLEDQSLINDICRNDDSVLHLLVRRSAKVRVKPVEKNFELSIVAPQAKDKKGREAKSIVPPKKLSLEPVVVNSKAKVPLVVKDMIQSASDGLKSGNSPVRSSEGTGGAYFMQGPSGNKFVGVFKPIDEEPMAENNPQGLPLSPNGEGLKKGTKVGEGALREVAAYILDHPKSGNKSMFGEEIGFAGVPPTAMIECLHPGFNHPKGIKTKIGSLQMFTENDGSCEDMGPLSFPVEEVHKISVLDIRLANADRHGGNILMTKDESGKLVLVPIDHGYCLPESFEDCTFEWLYWPQARKPYSAETQEYIRSLDAEEDIDLLKFHGWKMPAETAQTLRISTMLLKKGVERGLTAFEIGTIMCRETLSKKSLVEEMVEEAQEAVLPGTSEAAFLEALSDVMDYHLDHSQEH.

2 consecutive Ubiquitin-like domains span residues Thr-34 to Gln-111 and Val-112 to Arg-190. The segment covering Asp-250–Glu-263 has biased composition (polar residues). The disordered stretch occupies residues Asp-250–Gln-272. The PI3K/PI4K catalytic domain maps to Gly-255–Ala-547. Positions Ser-261–Gly-267 are G-loop. ATP contacts are provided by residues Ser-262 to Ala-268, Lys-284, and Gln-374 to Thr-377. The tract at residues Ala-407–Asn-415 is catalytic loop. The tract at residues Pro-430 to Lys-456 is activation loop. Asp-432 serves as a coordination point for ATP.

Belongs to the PI3/PI4-kinase family. Type II PI4K subfamily. Interacts with RPN10, UFD1 and CDC48 in vitro. Autophosphorylated.

It localises to the membrane. It catalyses the reaction a 1,2-diacyl-sn-glycero-3-phospho-(1D-myo-inositol) + ATP = a 1,2-diacyl-sn-glycero-3-phospho-(1D-myo-inositol 4-phosphate) + ADP + H(+). In terms of biological role, the phosphorylation of phosphatidylinositol (PI) to PI4P is the first committed step in the generation of phosphatidylinositol 4,5-bisphosphate (PIP2), a precursor of the second messenger inositol 1,4,5-trisphosphate (InsP3). Undergoes autophosphorylation and phosphorylates serine/threonine residues of protein substrates. Phosphorylates RPN10 and UFD1 in vitro. This is Phosphatidylinositol 4-kinase gamma 4 from Arabidopsis thaliana (Mouse-ear cress).